The sequence spans 216 residues: ADP-ribosylation factor D (216 aa).

Over residues 188-204 (SKFSFSNKSKQQKSNSQ) the composition is skewed to low complexity. Residues 188–216 (SKFSFSNKSKQQKSNSQPNTPRKNIQMMT) form a disordered region. Residues 205–216 (PNTPRKNIQMMT) show a composition bias toward polar residues.

Belongs to the small GTPase superfamily. Arf family.

Its subcellular location is the golgi apparatus. Its function is as follows. GTP-binding protein involved in protein trafficking; may modulate vesicle budding and uncoating within the Golgi apparatus. The chain is ADP-ribosylation factor D (arrD) from Dictyostelium discoideum (Social amoeba).